Here is a 311-residue protein sequence, read N- to C-terminus: Inositol oxygenase 1 (311 aa).

The segment covering 1–11 (MTILIDRHSDQ) has biased composition (basic and acidic residues). The segment at 1–29 (MTILIDRHSDQNDAGDEIVEKNQGNGKEE) is disordered. Residues arginine 52 and 109–111 (DES) contribute to the substrate site. Fe cation contacts are provided by histidine 122, histidine 147, and aspartate 148. Residues lysine 151 and 168-169 (GD) each bind substrate. Positions 220, 246, and 279 each coordinate Fe cation. 246 to 247 (HS) provides a ligand contact to substrate.

The protein belongs to the myo-inositol oxygenase family. The cofactor is Fe cation. Expressed in roots, young leaves, stems, flowers and siliques.

It localises to the cytoplasm. It catalyses the reaction myo-inositol + O2 = D-glucuronate + H2O + H(+). It participates in polyol metabolism; myo-inositol degradation into D-glucuronate; D-glucuronate from myo-inositol: step 1/1. Its function is as follows. Catalyzes the oxygenative cleavage of myo-inositol to D-glucuronate. Involved in the biosynthesis of UDP-glucuronic acid (UDP-GlcA), providing nucleotide sugars for cell-wall polymers. May be also involved in plant ascorbate biosynthesis. This chain is Inositol oxygenase 1 (MIOX1), found in Arabidopsis thaliana (Mouse-ear cress).